Here is a 281-residue protein sequence, read N- to C-terminus: Small ribosomal subunit protein uS2 (281 aa).

The protein belongs to the universal ribosomal protein uS2 family.

The protein is Small ribosomal subunit protein uS2 (rpsB) of Chlamydia muridarum (strain MoPn / Nigg).